The following is a 516-amino-acid chain: Maturase K (516 aa).

It belongs to the intron maturase 2 family. MatK subfamily.

It is found in the plastid. The protein localises to the chloroplast. Usually encoded in the trnK tRNA gene intron. Probably assists in splicing its own and other chloroplast group II introns. This chain is Maturase K, found in Chara vulgaris (Common stonewort).